We begin with the raw amino-acid sequence, 285 residues long: Shikimate dehydrogenase (NADP(+)) (285 aa).

Shikimate contacts are provided by residues 22-24 (SMS) and threonine 69. Residue lysine 73 is the Proton acceptor of the active site. Aspartate 85 contributes to the NADP(+) binding site. Positions 94 and 110 each coordinate shikimate. NADP(+) contacts are provided by residues 136 to 140 (GAGGA), 160 to 165 (NRTVAR), and methionine 225. Shikimate is bound at residue tyrosine 227. Position 248 (glycine 248) interacts with NADP(+).

The protein belongs to the shikimate dehydrogenase family. As to quaternary structure, homodimer.

The catalysed reaction is shikimate + NADP(+) = 3-dehydroshikimate + NADPH + H(+). It participates in metabolic intermediate biosynthesis; chorismate biosynthesis; chorismate from D-erythrose 4-phosphate and phosphoenolpyruvate: step 4/7. In terms of biological role, involved in the biosynthesis of the chorismate, which leads to the biosynthesis of aromatic amino acids. Catalyzes the reversible NADPH linked reduction of 3-dehydroshikimate (DHSA) to yield shikimate (SA). The sequence is that of Shikimate dehydrogenase (NADP(+)) from Caulobacter vibrioides (strain ATCC 19089 / CIP 103742 / CB 15) (Caulobacter crescentus).